Consider the following 370-residue polypeptide: Putative F-box protein At1g46984 (370 aa).

The 47-residue stretch at 18 to 64 folds into the F-box domain; the sequence is YTQLSTLPIDLIIEILSRLPMNSIAICRLVSKQWASILQSSDFTESF.

The protein is Putative F-box protein At1g46984 of Arabidopsis thaliana (Mouse-ear cress).